We begin with the raw amino-acid sequence, 471 residues long: Transcription initiation factor TFIID subunit 7-like (471 aa).

3 disordered regions span residues 1 to 84 (MERG…RQGT), 192 to 211 (SPEG…TGPT), and 328 to 377 (EMMG…EELE). S199 carries the phosphoserine modification. Residues 347–377 (GDDDDDEDEDDEDYGNEKEEEETDNSEEELE) are compositionally biased toward acidic residues. Positions 358–433 (EDYGNEKEEE…QKELLRKVEN (76 aa)) form a coiled coil.

The protein belongs to the TAF7 family. In terms of assembly, TFIID is composed of TATA binding protein (TBP) and a number of TBP-associated factors (TAFs). TAF7L may replace TAF7 in a spermatogenesis-specific form of TFIID. Interacts with TBP; the interaction occurs in a sub-population of cells (pachytene and haploid round spermatids) and is developmentally regulated through differential intracellular localization of the two proteins. Interacts with TAF1. In terms of tissue distribution, testis-specific (at protein level). Expressed during spermatogenesis from spermatogonia stage up to the stage of round spermatids.

It is found in the nucleus. Its subcellular location is the cytoplasm. In terms of biological role, probably functions as a spermatogenesis-specific component of the DNA-binding general transcription factor complex TFIID, a multimeric protein complex that plays a central role in mediating promoter responses to various activators and repressors. May play a role in spermatogenesis. This chain is Transcription initiation factor TFIID subunit 7-like (Taf7l), found in Mus musculus (Mouse).